Here is a 133-residue protein sequence, read N- to C-terminus: Late embryogenesis abundant protein B19.3 (133 aa).

The disordered stretch occupies residues Met-1–Ser-133. Composition is skewed to basic and acidic residues over residues Glu-7–Glu-19, Glu-32–Arg-102, and Gly-113–Ser-133. A run of 3 repeats spans residues Gly-24 to Arg-43, Gly-44 to Lys-63, and Gly-64 to Lys-83. The segment at Gly-24–Lys-83 is 3 X 20 AA tandem repeats.

This sequence belongs to the small hydrophilic plant seed protein family.

Its function is as follows. Lea proteins are late embryonic proteins abundant in higher plant seed embryos. The sequence is that of Late embryogenesis abundant protein B19.3 (B19.3) from Hordeum vulgare (Barley).